An 86-amino-acid chain; its full sequence is RNA-binding protein Hfq (86 aa).

Residues 9-68 (DPYLNTLRKEKVGVSIYLVNGIKLQGTIESFDQFVILLKNTVSQMVYKHAISTVVPVRPI) enclose the Sm domain.

This sequence belongs to the Hfq family. In terms of assembly, homohexamer.

Functionally, RNA chaperone that binds small regulatory RNA (sRNAs) and mRNAs to facilitate mRNA translational regulation in response to envelope stress, environmental stress and changes in metabolite concentrations. Also binds with high specificity to tRNAs. This is RNA-binding protein Hfq from Pseudomonas fluorescens (strain Pf0-1).